A 545-amino-acid chain; its full sequence is Chaperonin GroEL 2 (545 aa).

ATP contacts are provided by residues 29–32 (TLGP), 86–90 (DGTTT), G413, 479–481 (NAA), and D495.

The protein belongs to the chaperonin (HSP60) family. Forms a cylinder of 14 subunits composed of two heptameric rings stacked back-to-back. Interacts with the co-chaperonin GroES.

The protein resides in the cytoplasm. The enzyme catalyses ATP + H2O + a folded polypeptide = ADP + phosphate + an unfolded polypeptide.. In terms of biological role, together with its co-chaperonin GroES, plays an essential role in assisting protein folding. The GroEL-GroES system forms a nano-cage that allows encapsulation of the non-native substrate proteins and provides a physical environment optimized to promote and accelerate protein folding. The protein is Chaperonin GroEL 2 of Prochlorococcus marinus (strain AS9601).